The following is a 78-amino-acid chain: Small ribosomal subunit protein bS18 (78 aa).

It belongs to the bacterial ribosomal protein bS18 family. In terms of assembly, part of the 30S ribosomal subunit. Forms a tight heterodimer with protein bS6.

Functionally, binds as a heterodimer with protein bS6 to the central domain of the 16S rRNA, where it helps stabilize the platform of the 30S subunit. The chain is Small ribosomal subunit protein bS18 from Pseudothermotoga lettingae (strain ATCC BAA-301 / DSM 14385 / NBRC 107922 / TMO) (Thermotoga lettingae).